We begin with the raw amino-acid sequence, 314 residues long: MMMENFKHTTVLLDEAVNGLNIRPDGIYIDGTFGRGGHSRLILSRLGEEGRLLAIDRDPQAIAEAQAINDPRFSIIHGPFSALADYVSERELIGKIDGILLDLGVSSPQLDDAERGFSFMRDGPLDMRMDPTRGQSAAEWLQTAEEADIAWVLKTFGEERFAKRIARAIVERNREQPMTRTKELAEVVAAATPVKDKFKHPATRTFQAVRIWVNSELEEIEQALKSSLSVLAPGGRLSIISFHSLEDRIVKRFMREQSRGPQVPAGLPMTEEQLKKLGGRELRALGKLMPGEEEVAENPRARSSVLRIAERTNA.

Residues 36–38 (GGH), aspartate 56, phenylalanine 80, aspartate 102, and glutamine 109 each bind S-adenosyl-L-methionine.

This sequence belongs to the methyltransferase superfamily. RsmH family.

The protein localises to the cytoplasm. The enzyme catalyses cytidine(1402) in 16S rRNA + S-adenosyl-L-methionine = N(4)-methylcytidine(1402) in 16S rRNA + S-adenosyl-L-homocysteine + H(+). Functionally, specifically methylates the N4 position of cytidine in position 1402 (C1402) of 16S rRNA. The chain is Ribosomal RNA small subunit methyltransferase H from Citrobacter koseri (strain ATCC BAA-895 / CDC 4225-83 / SGSC4696).